Reading from the N-terminus, the 118-residue chain is MTDLIPLEQAHCLPRKGSDHKLGEARLAELLPQVPGWELAESGMAITRTFRFADYYRTLAFVNALAWIAHREDHHPDLGVHYDRVVVRYSTHDVGGLSENDFICAAKAAQLFDQGITA.

It belongs to the pterin-4-alpha-carbinolamine dehydratase family.

The enzyme catalyses (4aS,6R)-4a-hydroxy-L-erythro-5,6,7,8-tetrahydrobiopterin = (6R)-L-erythro-6,7-dihydrobiopterin + H2O. The protein is Putative pterin-4-alpha-carbinolamine dehydratase of Xanthomonas campestris pv. campestris (strain B100).